A 308-amino-acid chain; its full sequence is Putative mitochondrial transporter UCP3 (308 aa).

The Mitochondrial intermembrane segment spans residues 1–10 (MVGLQPSEVP). A helical transmembrane segment spans residues 11–32 (PTTVVKFLGAGTAACFADLLTF). 3 Solcar repeats span residues 11-102 (PTTV…VKQF), 111-202 (SSVA…IKEK), and 211-296 (DNFP…LKRA). The Mitochondrial matrix segment spans residues 33–73 (PLDTAKVRLQIQGENPGVQSVQYRGVLGTILTMVRTEGPRS). Residues 74 to 96 (PYSGLVAGLHRQMSFASIRIGLY) traverse the membrane as a helical segment. The Mitochondrial intermembrane segment spans residues 97 to 116 (DSVKQFYTPKGTDHSSVAIR). Residues 117 to 133 (ILAGCTTGAMAVTCAQP) form a helical membrane-spanning segment. The Mitochondrial matrix segment spans residues 134-179 (TDVVKVRFQAMIRLGTGGERKYRGTMDAYRTIAREEGVRGLWKGTW). A helical transmembrane segment spans residues 180–196 (PNITRNAIVNCAEMVTY). Topologically, residues 197-213 (DIIKEKLLDSHLFTDNF) are mitochondrial intermembrane. The chain crosses the membrane as a helical span at residues 214 to 233 (PCHFVSAFGAGFCATVVASP). The Mitochondrial matrix segment spans residues 234–267 (VDVVKTRYMNAPPGRYRSPLHCMLRMVAQEGPTA). The chain crosses the membrane as a helical span at residues 268–290 (FYKGFMPSFLRLGSWNVMMFVTY). Positions 275–297 (SFLRLGSWNVMMFVTYEQLKRAL) are purine nucleotide binding. The Mitochondrial intermembrane segment spans residues 291–308 (EQLKRALMKVQVLRESPF).

The protein belongs to the mitochondrial carrier (TC 2.A.29) family. As to quaternary structure, interacts with HAX1; the interaction is direct and calcium-dependent.

The protein localises to the mitochondrion inner membrane. In terms of biological role, putative transmembrane transporter that plays a role in mitochondrial metabolism via an as yet unclear mechanism. Originally, this mitochondrial protein was thought to act as a proton transmembrane transporter from the mitochondrial intermembrane space into the matrix, causing proton leaks through the inner mitochondrial membrane, thereby uncoupling mitochondrial membrane potential generation from ATP synthesis. However, this function is controversial and uncoupling may not be the function, or at least not the main function, but rather a consequence of more conventional metabolite transporter activity. The sequence is that of Putative mitochondrial transporter UCP3 from Rattus norvegicus (Rat).